A 237-amino-acid polypeptide reads, in one-letter code: MHDRPIIALDFPTQKEVAVFLEKFPKEEALFVKVGMELFYAEGPAIVRWLKEQGHDVFLDLKLHDIPNTVEKAMTNLAKLGVAITNVHAAGGVRMMQAAKEGLIKGTQPGAKVPELIAVTQLTSTSEEEMHHDQLINVPLETSVIHYAKCAEKAGLDGVVCSALEARGIQEATKQTFICLTPGIRPAGSAVGDQQRVVTPQHAREIGSTYIVVGRPITQAENPYEAYQEIKKDWSEK.

Substrate is bound by residues Asp10, Lys33, 60 to 69, Thr123, Arg185, Gln194, Gly214, and Arg215; that span reads DLKLHDIPNT. Lys62 (proton donor) is an active-site residue.

The protein belongs to the OMP decarboxylase family. Type 1 subfamily. In terms of assembly, homodimer.

It carries out the reaction orotidine 5'-phosphate + H(+) = UMP + CO2. The protein operates within pyrimidine metabolism; UMP biosynthesis via de novo pathway; UMP from orotate: step 2/2. Functionally, catalyzes the decarboxylation of orotidine 5'-monophosphate (OMP) to uridine 5'-monophosphate (UMP). This is Orotidine 5'-phosphate decarboxylase from Enterococcus faecalis (strain ATCC 700802 / V583).